A 197-amino-acid polypeptide reads, in one-letter code: UPF0056 inner membrane protein YhgN (197 aa).

Residues 1-3 (MNE) are Periplasmic-facing. The helical transmembrane segment at 4-24 (IISAAVLLILIMDPLGNLPIF) threads the bilayer. Topologically, residues 25–44 (MSVLKHTEPKRRRAIMVREL) are cytoplasmic. A helical membrane pass occupies residues 45–65 (LIALLVMLVFLFAGEKILAFL). Over 66–71 (SLRAET) the chain is Periplasmic. The helical transmembrane segment at 72-92 (VSISGGIILFLIAIKMIFPSA) threads the bilayer. The Cytoplasmic segment spans residues 93–105 (SGNSSGLPAGEEP). A helical transmembrane segment spans residues 106–126 (FIVPLAIPLVAGPTILATLML). The Periplasmic segment spans residues 127 to 138 (LSHQYPNQMGHL). A helical transmembrane segment spans residues 139 to 159 (VIALLLAWGGTFVILLQSSLF). Residues 160 to 173 (LRLLGEKGVNALER) are Cytoplasmic-facing. A helical transmembrane segment spans residues 174–194 (LMGLILVMMATQMFLDGIRMW). Over 195–197 (MKG) the chain is Periplasmic.

The protein belongs to the UPF0056 (MarC) family.

Its subcellular location is the cell inner membrane. The chain is UPF0056 inner membrane protein YhgN (yhgN) from Escherichia coli O157:H7.